The chain runs to 292 residues: Ventral anterior homeobox 2 (292 aa).

Over residues 1–36 (MGDGGAERDRGPKRREEPGGRSGRHGEHRGAEDLRA) the composition is skewed to basic and acidic residues. The disordered stretch occupies residues 1 to 74 (MGDGGAERDR…DGQQALGETD (74 aa)). The homeobox DNA-binding region spans 102–161 (PKRTRTSFTAEQLYRLEMEFQRCQYVVGRERTELARQLNLSETQVKVWFQNRRTKQKKDQ). The tract at residues 207–242 (LPGLPASHRGTSLVDPRNSSPRLNPMPSASASSPLP) is disordered.

It belongs to the EMX homeobox family. In terms of tissue distribution, expressed in the developing and mature retina.

Its subcellular location is the nucleus. Transcription factor that may function in dorsoventral specification of the forebrain. Regulates the expression of Wnt signaling antagonists including the expression of a truncated TCF7L2 isoform that cannot bind CTNNB1 and acts therefore as a potent dominant-negative Wnt antagonist. Plays a crucial role in eye development and, in particular, in the specification of the ventral optic vesicle. May be a regulator of axial polarization in the retina. In Mus musculus (Mouse), this protein is Ventral anterior homeobox 2 (Vax2).